Here is a 274-residue protein sequence, read N- to C-terminus: Large ribosomal subunit protein bL28m (274 aa).

Residues 249-274 are disordered; sequence SETEEFGLGQEEDLFMKEEPKPTKMA. Residues 262 to 274 are compositionally biased toward basic and acidic residues; the sequence is LFMKEEPKPTKMA.

The protein belongs to the bacterial ribosomal protein bL28 family. Component of the mitochondrial large ribosomal subunit (mt-LSU). Mature N.crassa 74S mitochondrial ribosomes consist of a small (37S) and a large (54S) subunit. The 37S small subunit contains a 16S ribosomal RNA (16S mt-rRNA) and 32 different proteins. The 54S large subunit contains a 23S rRNA (23S mt-rRNA) and 42 different proteins.

Its subcellular location is the mitochondrion. Component of the mitochondrial ribosome (mitoribosome), a dedicated translation machinery responsible for the synthesis of mitochondrial genome-encoded proteins, including at least some of the essential transmembrane subunits of the mitochondrial respiratory chain. The mitoribosomes are attached to the mitochondrial inner membrane and translation products are cotranslationally integrated into the membrane. This is Large ribosomal subunit protein bL28m (mrpl24) from Neurospora crassa (strain ATCC 24698 / 74-OR23-1A / CBS 708.71 / DSM 1257 / FGSC 987).